A 101-amino-acid polypeptide reads, in one-letter code: MLSLAHYLVLGAVLFAISIVGIFLNRKNVIVLLMAIELMLLAVNMNFVAFSHYLGDLAGQVFVFFILTVAAAESAIGLAILVVLFRNLDTINVDDLDSLKG.

3 helical membrane-spanning segments follow: residues 4 to 24 (LAHY…GIFL), 30 to 50 (IVLL…FVAF), and 61 to 81 (VFVF…LAIL).

It belongs to the complex I subunit 4L family. In terms of assembly, NDH-1 is composed of 14 different subunits. Subunits NuoA, H, J, K, L, M, N constitute the membrane sector of the complex.

The protein localises to the cell inner membrane. It carries out the reaction a quinone + NADH + 5 H(+)(in) = a quinol + NAD(+) + 4 H(+)(out). In terms of biological role, NDH-1 shuttles electrons from NADH, via FMN and iron-sulfur (Fe-S) centers, to quinones in the respiratory chain. The immediate electron acceptor for the enzyme in this species is believed to be ubiquinone. Couples the redox reaction to proton translocation (for every two electrons transferred, four hydrogen ions are translocated across the cytoplasmic membrane), and thus conserves the redox energy in a proton gradient. The sequence is that of NADH-quinone oxidoreductase subunit K from Ralstonia nicotianae (strain ATCC BAA-1114 / GMI1000) (Ralstonia solanacearum).